Here is a 114-residue protein sequence, read N- to C-terminus: Large ribosomal subunit protein bL19 (114 aa).

The protein belongs to the bacterial ribosomal protein bL19 family.

This protein is located at the 30S-50S ribosomal subunit interface and may play a role in the structure and function of the aminoacyl-tRNA binding site. The sequence is that of Large ribosomal subunit protein bL19 from Acetivibrio thermocellus (strain ATCC 27405 / DSM 1237 / JCM 9322 / NBRC 103400 / NCIMB 10682 / NRRL B-4536 / VPI 7372) (Clostridium thermocellum).